We begin with the raw amino-acid sequence, 270 residues long: Regulator of G-protein signaling rgs-10 (270 aa).

The RGS domain maps to 135-252; the sequence is SPETLAASEY…LEDPLYLDLV (118 aa).

Its function is as follows. Shown to have a role in viability and embryogenesis. This Caenorhabditis elegans protein is Regulator of G-protein signaling rgs-10 (rgs-10).